Here is a 58-residue protein sequence, read N- to C-terminus: GFAWTMLCMNEIFYFIGALGPLFIVLALTGLELGVAILQAYVFTILICIYLNDAINLH.

Helical transmembrane passes span 11-31 (EIFY…LTGL) and 35-55 (VAIL…NDAI).

It belongs to the ATPase A chain family. In terms of assembly, F-type ATPases have 2 components, CF(1) - the catalytic core - and CF(0) - the membrane proton channel. CF(1) has five subunits: alpha(3), beta(3), gamma(1), delta(1), epsilon(1). CF(0) has three main subunits: a, b and c.

The protein localises to the mitochondrion inner membrane. Functionally, mitochondrial membrane ATP synthase (F(1)F(0) ATP synthase or Complex V) produces ATP from ADP in the presence of a proton gradient across the membrane which is generated by electron transport complexes of the respiratory chain. F-type ATPases consist of two structural domains, F(1) - containing the extramembraneous catalytic core and F(0) - containing the membrane proton channel, linked together by a central stalk and a peripheral stalk. During catalysis, ATP synthesis in the catalytic domain of F(1) is coupled via a rotary mechanism of the central stalk subunits to proton translocation. Key component of the proton channel; it may play a direct role in the translocation of protons across the membrane. This Brassica tournefortii (Wild turnip) protein is ATP synthase subunit a (ATP6).